The chain runs to 1237 residues: ATP-dependent RNA helicase DEAH13 (1237 aa).

Disordered stretches follow at residues 1-51 and 115-148; these read MASV…NSNV and AMQL…EPTT. Residues 24–38 show a composition bias toward polar residues; the sequence is SNKMQDKLNSNNNTG. Residues 131 to 143 show a composition bias toward acidic residues; sequence SVEQNDNDDDSCM. Positions 251 to 443 constitute a Helicase ATP-binding domain; it reads MEAINRHPAV…KRLFPNIPPL (193 aa). 264–271 provides a ligand contact to ATP; that stretch reads GQTGCGKT. The DEAH box signature appears at 367 to 370; the sequence is DEAH. A disordered region spans residues 543–585; sequence DDDSNNQNSRFSSHGEDPSDIGDGNYDDDFEEEDMYESDEDRD. Over residues 567 to 585 the composition is skewed to acidic residues; it reads NYDDDFEEEDMYESDEDRD. The Helicase C-terminal domain maps to 605–776; sequence ALRAAFNALA…GVILLMKSMN (172 aa). Residues 876–910 form a disordered region; sequence EKKNESKDADKTVKQEDKQRKKDRKEKIKAARDRF.

Belongs to the DEAD box helicase family. DEAH subfamily.

It carries out the reaction ATP + H2O = ADP + phosphate + H(+). In Arabidopsis thaliana (Mouse-ear cress), this protein is ATP-dependent RNA helicase DEAH13.